A 60-amino-acid polypeptide reads, in one-letter code: Myrmicitoxin(1)-Pr4a (60 aa).

The first 23 residues, 1 to 23 (MKAIIFLFAVLTVVAIIIPIISG), serve as a signal peptide directing secretion. The propeptide occupies 24–33 (EPNAGPHAAS). Glutamine amide is present on Q59.

Belongs to the formicidae venom clade 2 family. As to expression, expressed by the venom gland.

It localises to the secreted. Functionally, toxin that causes a rapid and irreversible paralysis when intrathoracically injected into insects (blowflies). Does not cause spontaneous nocifensive behaviors by intraplantar injection in mice. The protein is Myrmicitoxin(1)-Pr4a of Pogonomyrmex rugosus (Desert harvester ant).